The primary structure comprises 451 residues: Ubiquinone biosynthesis monooxygenase COQ6, mitochondrial (451 aa).

Belongs to the UbiH/COQ6 family. As to quaternary structure, component of a multi-subunit COQ enzyme complex. FAD serves as cofactor.

Its subcellular location is the mitochondrion inner membrane. The catalysed reaction is a 4-hydroxy-3-(all-trans-polyprenyl)benzoate + 2 reduced [2Fe-2S]-[ferredoxin] + O2 + 2 H(+) = a 3,4-dihydroxy-5-(all-trans-polyprenyl)benzoate + 2 oxidized [2Fe-2S]-[ferredoxin] + H2O. It catalyses the reaction a 2-methoxy-6-(all-trans-polyprenyl)phenol + 2 reduced [2Fe-2S]-[ferredoxin] + O2 + 2 H(+) = a 2-methoxy-6-(all-trans-polyprenyl)benzene-1,4-diol + 2 oxidized [2Fe-2S]-[ferredoxin] + H2O. It functions in the pathway cofactor biosynthesis; ubiquinone biosynthesis. Functionally, FAD-dependent monooxygenase required for two non-consecutive steps during ubiquinone biosynthesis. Required for the C5-ring hydroxylation during ubiquinone biosynthesis by catalyzing the hydroxylation of 4-hydroxy-3-(all-trans-polyprenyl)benzoic acid to 3,4-dihydroxy-5-(all-trans-polyprenyl)benzoic acid. Also acts downstream of coq4, for the C1-hydroxylation during ubiquinone biosynthesis by catalyzing the hydroxylation of 2-methoxy-6-(all-trans-polyprenyl)phenol to 2-methoxy-6-(all-trans-polyprenyl)benzene-1,4-diol. The electrons required for the hydroxylation reaction are funneled indirectly to coq-6 from NADPH via a ferredoxin/ferredoxin reductase system. In Caenorhabditis elegans, this protein is Ubiquinone biosynthesis monooxygenase COQ6, mitochondrial.